Consider the following 344-residue polypeptide: Phosphate acyltransferase (344 aa).

Belongs to the PlsX family. As to quaternary structure, homodimer. Probably interacts with PlsY.

Its subcellular location is the cytoplasm. The catalysed reaction is a fatty acyl-[ACP] + phosphate = an acyl phosphate + holo-[ACP]. Its pathway is lipid metabolism; phospholipid metabolism. Its function is as follows. Catalyzes the reversible formation of acyl-phosphate (acyl-PO(4)) from acyl-[acyl-carrier-protein] (acyl-ACP). This enzyme utilizes acyl-ACP as fatty acyl donor, but not acyl-CoA. This chain is Phosphate acyltransferase, found in Sphingopyxis alaskensis (strain DSM 13593 / LMG 18877 / RB2256) (Sphingomonas alaskensis).